A 150-amino-acid chain; its full sequence is Viral late gene transcription factor 2 (150 aa).

This sequence belongs to the orthopoxvirus VLTF-2/OPG126 family. As to quaternary structure, interacts with itself. Interacts with the late transcription factors VLTF-1/OPG093.

Acts with RNA polymerase to initiate transcription from late gene promoters. In Vaccinia virus (strain Western Reserve) (VACV), this protein is Viral late gene transcription factor 2 (OPG126).